The sequence spans 312 residues: Peptide methionine sulfoxide reductase MsrA/MsrB 1 (312 aa).

The segment at 1–155 (MAEIYLAGGC…PSGYCHIDVT (155 aa)) is peptide methionine sulfoxide reductase. Cys-10 is a catalytic residue. The 124-residue stretch at 172 to 295 (QEVLKASLSE…NSASLRFVAK (124 aa)) folds into the MsrB domain. The active-site Nucleophile is the Cys-284.

This sequence in the N-terminal section; belongs to the MsrA Met sulfoxide reductase family. The protein in the C-terminal section; belongs to the MsrB Met sulfoxide reductase family.

It localises to the cell membrane. The catalysed reaction is L-methionyl-[protein] + [thioredoxin]-disulfide + H2O = L-methionyl-(S)-S-oxide-[protein] + [thioredoxin]-dithiol. It carries out the reaction [thioredoxin]-disulfide + L-methionine + H2O = L-methionine (S)-S-oxide + [thioredoxin]-dithiol. It catalyses the reaction L-methionyl-[protein] + [thioredoxin]-disulfide + H2O = L-methionyl-(R)-S-oxide-[protein] + [thioredoxin]-dithiol. Has an important function as a repair enzyme for proteins that have been inactivated by oxidation. Catalyzes the reversible oxidation-reduction of methionine sulfoxide in proteins to methionine. The chain is Peptide methionine sulfoxide reductase MsrA/MsrB 1 (msrAB1) from Streptococcus pneumoniae serotype 4 (strain ATCC BAA-334 / TIGR4).